Consider the following 1371-residue polypeptide: F-actin-uncapping protein LRRC16A (1371 aa).

At M1 the chain carries N-acetylmethionine. S122 carries the post-translational modification Phosphoserine. LRR repeat units lie at residues 245 to 269, 275 to 298, 304 to 327, 336 to 363, 391 to 418, 423 to 447, 481 to 506, 543 to 566, 570 to 593, and 654 to 678; these read SNRLEELVLENAGLRTDFAQKLASA, NSGLHTINLAGNPLEDRGVSSLSI, PKGLKHLNLSKTSLSPKGVNSLSQ, ASTLVHLDLSGNVLRGDDLSHMYNFLAQ, LQYLAVLNLSRTVFSHRKGKEVPPSFKQ, SLALMHINLSGTKLSPEPLKALLLG, IHNITSLDISDNGLESDLSTLIVWLS, ESPLQSLSLADSKLKTEVTIIINA, NTSLTKVDISGNGMGDMGAKMLAK, and LQKIENYLLRNHETRKYLQEQAYRL. A coiled-coil region spans residues 710-734; sequence GDAIQEDLKSAERLMRDAKNSKTLL. T916 is subject to Phosphothreonine. Disordered stretches follow at residues 957 to 1000, 1036 to 1159, and 1172 to 1371; these read PFPS…QPTQ, KMDS…RRYG, and KAKQ…FIFV. One copy of the LRR 11 repeat lies at 958–981; that stretch reads FPSLRQEKRSSGFISELPSEEGKK. The interval 958–1082 is inhibits capping activity of CAPZA2; that stretch reads FPSLRQEKRS…LIKSRSKSER (125 aa). Position 968 is a phosphoserine (S968). Basic and acidic residues-rich tracts occupy residues 977 to 986 and 1036 to 1061; these read EEGKKLEHFT and KMDSKKWSTRGSESHELNEGGDEKKK. The segment at 1055–1089 is necessary for localization at the cell membrane; sequence GGDEKKKRDSRKSSGFLNLIKSRSKSERPPTILMT. Phosphoserine is present on residues S1067 and S1094. 2 stretches are compositionally biased toward basic and acidic residues: residues 1106–1130 and 1139–1148; these read CPRKDTKAAEHNGNSERIEEIKTPD and EIGKVERSDS. The segment covering 1190–1199 has biased composition (polar residues); that stretch reads AVSQDSSSPA. T1228 is modified (phosphothreonine). The span at 1231–1243 shows a compositional bias: basic and acidic residues; it reads KNTKAEPKAEAGS. Residues 1244-1265 are compositionally biased toward low complexity; that stretch reads RSRSSSSTPTSPKPLLQSPKPS. Residues S1280, S1288, S1291, S1315, S1324, and S1331 each carry the phosphoserine modification. Polar residues predominate over residues 1313 to 1326; sequence QSSPQPSPRTFSQE. Residues 1340–1353 show a composition bias toward basic and acidic residues; sequence QEQKQRSSSKDGHQ. A Phosphoserine modification is found at S1360.

Belongs to the CARMIL family. In terms of assembly, homodimer. Interacts (via C-terminus) with heterodimer capping protein (CP); this interaction uncaps barbed ends capped by CP, enhances barbed-end actin polymerization and promotes lamellipodial formation and cell migration. Interacts with heterodimer capping protein (CP). Interacts with MYO1E. Interacts with TRIO. Expressed in lung, placenta, small intestine, liver, thymus, colon, skeletal muscle, heart and brain. Higher expression in kidney.

The protein resides in the cytoplasm. It localises to the cytoskeleton. It is found in the cell membrane. Its subcellular location is the cell projection. The protein localises to the lamellipodium. In terms of biological role, cell membrane-cytoskeleton-associated protein that plays a role in the regulation of actin polymerization at the barbed end of actin filaments. Prevents F-actin heterodimeric capping protein (CP) activity at the leading edges of migrating cells, and hence generates uncapped barbed ends and enhances actin polymerization, however, seems unable to nucleate filaments. Plays a role in lamellipodial protrusion formations and cell migration. This Homo sapiens (Human) protein is F-actin-uncapping protein LRRC16A.